The sequence spans 152 residues: Deoxyuridine 5'-triphosphate nucleotidohydrolase (152 aa).

Substrate contacts are provided by residues 72–74 (RSG), Asn-85, and 89–91 (TID).

It belongs to the dUTPase family. Mg(2+) serves as cofactor.

It carries out the reaction dUTP + H2O = dUMP + diphosphate + H(+). It participates in pyrimidine metabolism; dUMP biosynthesis; dUMP from dCTP (dUTP route): step 2/2. This enzyme is involved in nucleotide metabolism: it produces dUMP, the immediate precursor of thymidine nucleotides and it decreases the intracellular concentration of dUTP so that uracil cannot be incorporated into DNA. The protein is Deoxyuridine 5'-triphosphate nucleotidohydrolase of Rhodopseudomonas palustris (strain ATCC BAA-98 / CGA009).